We begin with the raw amino-acid sequence, 306 residues long: Curved DNA-binding protein (306 aa).

The J domain occupies Asp-5–Trp-69.

It is found in the cytoplasm. Its subcellular location is the nucleoid. In terms of biological role, DNA-binding protein that preferentially recognizes a curved DNA sequence. It is probably a functional analog of DnaJ; displays overlapping activities with DnaJ, but functions under different conditions, probably acting as a molecular chaperone in an adaptive response to environmental stresses other than heat shock. Lacks autonomous chaperone activity; binds native substrates and targets them for recognition by DnaK. Its activity is inhibited by the binding of CbpM. The sequence is that of Curved DNA-binding protein from Escherichia coli (strain SMS-3-5 / SECEC).